The chain runs to 75 residues: DNA-directed RNA polymerase subunit omega (75 aa).

The protein belongs to the RNA polymerase subunit omega family. In terms of assembly, in cyanobacteria the RNAP catalytic core is composed of 2 alpha, 1 beta, 1 beta', 1 gamma and 1 omega subunit. When a sigma factor is associated with the core the holoenzyme is formed, which can initiate transcription.

It carries out the reaction RNA(n) + a ribonucleoside 5'-triphosphate = RNA(n+1) + diphosphate. Its function is as follows. Promotes RNA polymerase assembly. Latches the N- and C-terminal regions of the beta' subunit thereby facilitating its interaction with the beta and alpha subunits. The sequence is that of DNA-directed RNA polymerase subunit omega from Gloeothece citriformis (strain PCC 7424) (Cyanothece sp. (strain PCC 7424)).